The following is a 175-amino-acid chain: Sec-independent protein translocase protein TatB (175 aa).

The helical transmembrane segment at 1-21 (MLDLGLSKMALIGVVALVVLG) threads the bilayer. A disordered region spans residues 155–175 (SGAARVARHQPASLRRPTRFF).

Belongs to the TatB family. As to quaternary structure, the Tat system comprises two distinct complexes: a TatABC complex, containing multiple copies of TatA, TatB and TatC subunits, and a separate TatA complex, containing only TatA subunits. Substrates initially bind to the TatABC complex, which probably triggers association of the separate TatA complex to form the active translocon.

The protein resides in the cell inner membrane. Its function is as follows. Part of the twin-arginine translocation (Tat) system that transports large folded proteins containing a characteristic twin-arginine motif in their signal peptide across membranes. Together with TatC, TatB is part of a receptor directly interacting with Tat signal peptides. TatB may form an oligomeric binding site that transiently accommodates folded Tat precursor proteins before their translocation. This Burkholderia lata (strain ATCC 17760 / DSM 23089 / LMG 22485 / NCIMB 9086 / R18194 / 383) protein is Sec-independent protein translocase protein TatB.